A 260-amino-acid chain; its full sequence is COP9 signalosome complex subunit 7 (260 aa).

In terms of domain architecture, PCI spans 1-159 (MDIEQKQAEI…RCFEVPFAAG (159 aa)). The disordered stretch occupies residues 228-260 (IRGNKEMFGEPSGVMDYEEDGIRPKRRRHPVTR). Basic residues predominate over residues 251–260 (PKRRRHPVTR).

It belongs to the CSN7/EIF3M family. CSN7 subfamily. In terms of assembly, component of the CSN complex, probably composed of CSN1, CSN2, CSN3, CSN4, CSN5 (CSN5A or CSN5B), CSN6 (CSN6A or CSN6B), CSN7 and CSN8. In the CSN complex, it probably interacts directly with CSN4. Interacts (via PCI domain) with CSN1 (via PCI domain) and CSN8 (via PCI domain), and (via C-terminal tail) with CSN6A, TSO2 and RNR2A. Cannot interact simultaneously with CSN1 and CSN8 to form ternary complexes. Also exists as a monomeric form. Binds to the translation initiation factors TIF3E1 and TIF3H1. Phosphorylated.

It is found in the cytoplasm. Its subcellular location is the nucleus. Its function is as follows. Component of the COP9 signalosome complex (CSN), a complex involved in various cellular and developmental processes such as photomorphogenesis and auxin and jasmonate responses. The CSN complex is an essential regulator of the ubiquitin (Ubl) conjugation pathway by mediating the deneddylation of the cullin subunits of SCF-type E3 ligase complexes, leading to decrease the Ubl ligase activity of SCF. It is involved in repression of photomorphogenesis in darkness by regulating the activity of COP1-containing Ubl ligase complexes. The complex is also required for degradation of IAA6 by regulating the activity of the Ubl ligase SCF-TIR complex. Regulates the TSO2 subcellular localization. May be involved in nucleic acid binding. This is COP9 signalosome complex subunit 7 (CSN7) from Arabidopsis thaliana (Mouse-ear cress).